Reading from the N-terminus, the 510-residue chain is NAD(P)H-quinone oxidoreductase subunit 2 B, chloroplastic (510 aa).

13 helical membrane-spanning segments follow: residues L24 to L44, I57 to F77, I99 to I119, M124 to C144, L149 to Y169, Y183 to G203, P227 to A247, W295 to I315, M323 to D343, Y354 to L374, A395 to F415, L418 to L438, and M484 to I504.

Belongs to the complex I subunit 2 family. In terms of assembly, NDH is composed of at least 16 different subunits, 5 of which are encoded in the nucleus.

It localises to the plastid. Its subcellular location is the chloroplast thylakoid membrane. It catalyses the reaction a plastoquinone + NADH + (n+1) H(+)(in) = a plastoquinol + NAD(+) + n H(+)(out). The enzyme catalyses a plastoquinone + NADPH + (n+1) H(+)(in) = a plastoquinol + NADP(+) + n H(+)(out). In terms of biological role, NDH shuttles electrons from NAD(P)H:plastoquinone, via FMN and iron-sulfur (Fe-S) centers, to quinones in the photosynthetic chain and possibly in a chloroplast respiratory chain. The immediate electron acceptor for the enzyme in this species is believed to be plastoquinone. Couples the redox reaction to proton translocation, and thus conserves the redox energy in a proton gradient. The chain is NAD(P)H-quinone oxidoreductase subunit 2 B, chloroplastic from Lactuca sativa (Garden lettuce).